We begin with the raw amino-acid sequence, 1033 residues long: uncharacterized protein (1033 aa).

This is an uncharacterized protein from Mycoplasma pneumoniae (strain ATCC 29342 / M129 / Subtype 1) (Mycoplasmoides pneumoniae).